The sequence spans 206 residues: Small ribosomal subunit protein uS4 (206 aa).

One can recognise an S4 RNA-binding domain in the interval 98-176; that stretch reads RRLDNVVYRL…APKWLEANRE (79 aa).

The protein belongs to the universal ribosomal protein uS4 family. As to quaternary structure, part of the 30S ribosomal subunit. Contacts protein S5. The interaction surface between S4 and S5 is involved in control of translational fidelity.

Functionally, one of the primary rRNA binding proteins, it binds directly to 16S rRNA where it nucleates assembly of the body of the 30S subunit. In terms of biological role, with S5 and S12 plays an important role in translational accuracy. This chain is Small ribosomal subunit protein uS4, found in Gloeobacter violaceus (strain ATCC 29082 / PCC 7421).